Consider the following 420-residue polypeptide: L-cysteine:1D-myo-inositol 2-amino-2-deoxy-alpha-D-glucopyranoside ligase (420 aa).

Residue C48 participates in Zn(2+) binding. Residues 48-51, T63, and 86-88 contribute to the L-cysteinyl-5'-AMP site; these read CGIT and NIT. Positions 50–60 match the 'HIGH' region motif; it reads ITPYDSTHLGH. A 'ERGGDP' region motif is present at residues 192–197; that stretch reads ERGGDP. Residue W232 coordinates L-cysteinyl-5'-AMP. Position 236 (C236) interacts with Zn(2+). L-cysteinyl-5'-AMP is bound at residue 254-256; that stretch reads GSD. H261 provides a ligand contact to Zn(2+). Residue I288 participates in L-cysteinyl-5'-AMP binding. Residues 294–298 carry the 'KMSKS' region motif; it reads KMSKS.

This sequence belongs to the class-I aminoacyl-tRNA synthetase family. MshC subfamily. In terms of assembly, monomer. It depends on Zn(2+) as a cofactor.

The enzyme catalyses 1D-myo-inositol 2-amino-2-deoxy-alpha-D-glucopyranoside + L-cysteine + ATP = 1D-myo-inositol 2-(L-cysteinylamino)-2-deoxy-alpha-D-glucopyranoside + AMP + diphosphate + H(+). Catalyzes the ATP-dependent condensation of GlcN-Ins and L-cysteine to form L-Cys-GlcN-Ins. This Corynebacterium glutamicum (strain R) protein is L-cysteine:1D-myo-inositol 2-amino-2-deoxy-alpha-D-glucopyranoside ligase.